The following is a 304-amino-acid chain: Non-specific ribonucleoside hydrolase RihC (304 aa).

Histidine 233 is an active-site residue.

This sequence belongs to the IUNH family. RihC subfamily.

In terms of biological role, hydrolyzes both purine and pyrimidine ribonucleosides with a broad-substrate specificity. This chain is Non-specific ribonucleoside hydrolase RihC, found in Shigella flexneri serotype 5b (strain 8401).